A 449-amino-acid chain; its full sequence is Glycerol-3-phosphate acyltransferase 3 (449 aa).

3 helical membrane passes run 9–29 (FVLL…PAMF), 146–166 (ISVR…CVLL), and 170–190 (ITLA…VGFL). The short motif at 238–243 (HTSPID) is the HXXXXD motif element. The chain crosses the membrane as a helical span at residues 358-378 (MVSYILRMMTSWAIVCNVWYL).

Belongs to the 1-acyl-sn-glycerol-3-phosphate acyltransferase family.

The protein resides in the endoplasmic reticulum membrane. The enzyme catalyses sn-glycerol 3-phosphate + an acyl-CoA = a 1-acyl-sn-glycero-3-phosphate + CoA. The catalysed reaction is a 1-acyl-sn-glycero-3-phosphate + an acyl-CoA = a 1,2-diacyl-sn-glycero-3-phosphate + CoA. It carries out the reaction dodecanoyl-CoA + sn-glycerol 3-phosphate = 1-dodecanoyl-sn-glycerol 3-phosphate + CoA. It catalyses the reaction sn-glycerol 3-phosphate + hexadecanoyl-CoA = 1-hexadecanoyl-sn-glycero-3-phosphate + CoA. The enzyme catalyses sn-glycerol 3-phosphate + (9Z)-octadecenoyl-CoA = 1-(9Z-octadecenoyl)-sn-glycero-3-phosphate + CoA. The catalysed reaction is (9Z,12Z)-octadecadienoyl-CoA + sn-glycerol 3-phosphate = 1-(9Z,12Z)-octadecadienoyl-sn-glycero-3-phosphate + CoA. It carries out the reaction 1-tetradecanoyl-sn-glycerol 3-phosphate + (9Z)-octadecenoyl-CoA = 1-tetradecanoyl-2-(9Z)-octadecenoyl-sn-glycero-3-phosphate + CoA. It catalyses the reaction 1-hexadecanoyl-sn-glycero-3-phosphate + (9Z)-octadecenoyl-CoA = 1-hexadecanoyl-2-(9Z-octadecenoyl)-sn-glycero-3-phosphate + CoA. The enzyme catalyses 1-(9Z-octadecenoyl)-sn-glycero-3-phosphate + (9Z)-octadecenoyl-CoA = 1,2-di-(9Z-octadecenoyl)-sn-glycero-3-phosphate + CoA. The catalysed reaction is 1-(6Z,9Z,12Z-octadecatrienoyl)-sn-glycero-3-phosphate + (9Z)-octadecenoyl-CoA = (6Z,9Z,12Z)-octadecatrienoyl-2-(9Z)-octadecenoyl-sn-glycero-3-phosphate + CoA. It carries out the reaction 1-(9Z,12Z,15Z)-octadecatrienoyl-sn-glycero-3-phosphate + (9Z)-octadecenoyl-CoA = 1-(9Z,12Z,15Z)-octadecatrienoyl-2-(9Z)-octadecenoyl-sn-glycero-3-phosphate + CoA. It catalyses the reaction 1-(9Z-octadecenoyl)-sn-glycero-3-phosphate + tetradecanoyl-CoA = 1-(9Z)-octadecenoyl-2-tetradecanoyl-sn-glycero-3-phosphate + CoA. The enzyme catalyses 1-(9Z-octadecenoyl)-sn-glycero-3-phosphate + hexadecanoyl-CoA = 1-(9Z)-octadecenoyl-2-hexadecanoyl-sn-glycero-3-phosphate + CoA. The catalysed reaction is 1-(9Z-octadecenoyl)-sn-glycero-3-phosphate + octadecanoyl-CoA = 1-(9Z-octadecenoyl)-2-octadecanoyl-sn-glycero-3-phosphate + CoA. It carries out the reaction 1-(9Z-octadecenoyl)-sn-glycero-3-phosphate + (9Z,12Z)-octadecadienoyl-CoA = 1-(9Z)-octadecenoyl-2-(9Z,12Z)-octadecadienoyl-sn-glycero-3-phosphate + CoA. It catalyses the reaction 1-(5Z,8Z,11Z,14Z-eicosatetraenoyl)-sn-glycero-3-phosphate + (9Z)-octadecenoyl-CoA = 1-(5Z,8Z,11Z,14Z)-eicosatetraenoyl-2-(9Z)-octadecenoyl-sn-glycero-3-phosphate + CoA. The protein operates within glycerolipid metabolism; triacylglycerol biosynthesis. It functions in the pathway phospholipid metabolism; CDP-diacylglycerol biosynthesis; CDP-diacylglycerol from sn-glycerol 3-phosphate: step 1/3. Its function is as follows. Converts glycerol-3-phosphate to 1-acyl-sn-glycerol-3-phosphate (lysophosphatidic acid or LPA) by incorporating an acyl moiety at the sn-1 position of the glycerol backbone. Also converts LPA into 1,2-diacyl-sn-glycerol-3-phosphate (phosphatidic acid or PA) by incorporating an acyl moiety at the sn-2 position of the glycerol backbone. Protects cells against lipotoxicity. This is Glycerol-3-phosphate acyltransferase 3 from Danio rerio (Zebrafish).